A 206-amino-acid chain; its full sequence is Small ribosomal subunit protein uS4 (206 aa).

The S4 RNA-binding domain occupies 98–164 (MRLDNVVYRL…EKFKTFIENP (67 aa)).

Belongs to the universal ribosomal protein uS4 family. Part of the 30S ribosomal subunit. Contacts protein S5. The interaction surface between S4 and S5 is involved in control of translational fidelity.

In terms of biological role, one of the primary rRNA binding proteins, it binds directly to 16S rRNA where it nucleates assembly of the body of the 30S subunit. With S5 and S12 plays an important role in translational accuracy. This Clostridium tetani (strain Massachusetts / E88) protein is Small ribosomal subunit protein uS4.